Consider the following 139-residue polypeptide: Non-structural protein 1 (139 aa).

The DLNP; interaction with MAP1B signature appears at 136 to 139; it reads DLNS.

It belongs to the pneumovirus non-structural protein 1 family. As to quaternary structure, monomer. Homomultimer. Heteromultimer with NS2. Interacts with the matrix protein M. Interacts with host ELOC and CUL2; this interaction allows NS1 to form an active E3 ligase with ELOC and CUL2. Interacts with host IRF3; this interaction leads to the disrupted association of IRF3 with CREBBP and thus reduced binding of IRF3 to the IFN-beta promoter. Interacts with host MAVS; this interaction prevents MAVS binding to RIGI and inhibits signaling pathway leading to interferon production. Interacts with host MAP1B/microtubule-associated protein 1B. Interacts with host TRIM25 (via SPRY domain); this interaction suppresses RIGI ubiquitination and results in decreased interaction between RIGI and MAVS.

It is found in the host cytoplasm. Its subcellular location is the host mitochondrion. The protein localises to the host nucleus. In terms of biological role, plays a major role in antagonizing the type I IFN-mediated antiviral response by degrading or inhibiting multiple cellular factors required for either IFN induction or response pathways. Acts cooperatively with NS2 to repress activation and nuclear translocation of host IFN-regulatory factor IRF3. Also disrupts the association of IRF3 with CREBBP. Interacts with host mitochondrial-associated membrane (MAM) MAVS and prevents the interaction with RIGI. Interacts with TRIM25 to suppress TRIM25-mediated RIGI ubiquitination and thereby RIGI-MAVS interaction. Together with NS2, participates in the proteasomal degradation of host STAT2, IRF3, IRF7, TBK1 and RIGI through a NS-degradasome involving CUL2 and Elongin-C. The degradasome requires an intact mitochondrial MAVS. Decreases the levels of host TRAF3 and IKBKE/IKK-epsilon. As functions other than disruptions of the type I IFN-mediated antiviral signaling pathways, induces host SOCS1 and SOCS3 expression. Suppresses premature apoptosis by an NF-kappa-B-dependent, interferon-independent mechanism and thus facilitates virus growth. Additionally, NS1 may serve some inhibitory role in viral transcription and RNA replication. Suppresses proliferation and activation of host CD103+ CD8+ cytotoxic T-lymphocytes and Th17 helper T-lymphocytes. The protein is Non-structural protein 1 (1C) of Human respiratory syncytial virus B (strain 18537).